Here is a 148-residue protein sequence, read N- to C-terminus: Aspartate carbamoyltransferase regulatory chain (148 aa).

Zn(2+)-binding residues include cysteine 106, cysteine 111, cysteine 134, and cysteine 137.

It belongs to the PyrI family. In terms of assembly, contains catalytic and regulatory chains. It depends on Zn(2+) as a cofactor.

In terms of biological role, involved in allosteric regulation of aspartate carbamoyltransferase. The sequence is that of Aspartate carbamoyltransferase regulatory chain from Methanococcus maripaludis (strain C5 / ATCC BAA-1333).